We begin with the raw amino-acid sequence, 370 residues long: DNA replication and repair protein RecF (370 aa).

30–37 (GPNGSGKT) is a binding site for ATP.

It belongs to the RecF family.

It is found in the cytoplasm. Its function is as follows. The RecF protein is involved in DNA metabolism; it is required for DNA replication and normal SOS inducibility. RecF binds preferentially to single-stranded, linear DNA. It also seems to bind ATP. The sequence is that of DNA replication and repair protein RecF from Prosthecochloris aestuarii (strain DSM 271 / SK 413).